A 379-amino-acid chain; its full sequence is Cell cycle checkpoint control protein RAD9A (379 aa).

The residue at position 17 (Tyr-17) is a Phosphotyrosine. Positions 40–80 (FLFAPLFFQQYQAATPGQDLLRCKILMKSFLSVFRSLAMLE) are possesses 3'-5' exonuclease activity. A sufficient for interaction with ABL1 region spans residues 255-379 (SDTDSHSQDL…VLAEDSEGEG (125 aa)). Residues 257 to 271 (TDSHSQDLGSPERHQ) are compositionally biased toward basic and acidic residues. Disordered stretches follow at residues 257 to 289 (TDSH…DFAN) and 308 to 379 (SRVL…EGEG). Phosphoserine is present on residues Ser-261, Ser-266, Ser-317, Ser-330, Ser-363, Ser-368, and Ser-375.

This sequence belongs to the rad9 family. As to quaternary structure, component of the toroidal 9-1-1 (RAD9-RAD1-HUS1) complex, composed of RAD9A, RAD1 and HUS1. The 9-1-1 complex associates with LIG1, POLB, FEN1, RAD17, HDAC1, RPA1 and RPA2. The 9-1-1 complex associates with the RAD17-RFC complex. RAD9A interacts with BCL2L1, FEN1, RAD9B, ABL1, RPA1, ATAD5 and RPA2. Interacts with DNAJC7. Interacts (when phosphorylated) with TOPBP1. In terms of processing, constitutively phosphorylated on serine and threonine amino acids in absence of DNA damage. Hyperphosphorylated by PRKCD and ABL1 upon DNA damage. Its phosphorylation by PRKCD may be required for the formation of the 9-1-1 complex. Phosphorylated at Ser-330 and Ser-375 by CK2, promoting interaction with TOPBP1.

The protein resides in the nucleus. The enzyme catalyses Exonucleolytic cleavage in the 3'- to 5'-direction to yield nucleoside 5'-phosphates.. Its function is as follows. Component of the 9-1-1 cell-cycle checkpoint response complex that plays a major role in DNA repair. The 9-1-1 complex is recruited to DNA lesion upon damage by the RAD17-replication factor C (RFC) clamp loader complex. Acts then as a sliding clamp platform on DNA for several proteins involved in long-patch base excision repair (LP-BER). The 9-1-1 complex stimulates DNA polymerase beta (POLB) activity by increasing its affinity for the 3'-OH end of the primer-template and stabilizes POLB to those sites where LP-BER proceeds; endonuclease FEN1 cleavage activity on substrates with double, nick, or gap flaps of distinct sequences and lengths; and DNA ligase I (LIG1) on long-patch base excision repair substrates. The 9-1-1 complex is necessary for the recruitment of RHNO1 to sites of double-stranded breaks (DSB) occurring during the S phase. RAD9A possesses 3'-&gt;5' double stranded DNA exonuclease activity. The chain is Cell cycle checkpoint control protein RAD9A (RAD9A) from Macaca fascicularis (Crab-eating macaque).